The sequence spans 437 residues: Adenylosuccinate synthetase (437 aa).

GTP is bound by residues 12–18 (GDEGKGK) and 40–42 (GHT). The active-site Proton acceptor is the D13. Positions 13 and 40 each coordinate Mg(2+). Residues 13–16 (DEGK), 38–41 (NAGH), T128, R142, Q223, T238, and R302 contribute to the IMP site. H41 acts as the Proton donor in catalysis. A substrate-binding site is contributed by 298–304 (TTTGRKR). GTP contacts are provided by residues R304, 330–332 (KLD), and 412–414 (SLG).

It belongs to the adenylosuccinate synthetase family. Homodimer. Mg(2+) is required as a cofactor.

It is found in the cytoplasm. The catalysed reaction is IMP + L-aspartate + GTP = N(6)-(1,2-dicarboxyethyl)-AMP + GDP + phosphate + 2 H(+). It functions in the pathway purine metabolism; AMP biosynthesis via de novo pathway; AMP from IMP: step 1/2. Plays an important role in the de novo pathway of purine nucleotide biosynthesis. Catalyzes the first committed step in the biosynthesis of AMP from IMP. This is Adenylosuccinate synthetase from Trichodesmium erythraeum (strain IMS101).